The primary structure comprises 66 residues: Nigrocin-2ISb (66 aa).

The first 22 residues, Met-1–Cys-22, serve as a signal peptide directing secretion. Residues Gln-23 to Ile-43 constitute a propeptide, removed in mature form. Cysteines 60 and 66 form a disulfide.

In terms of tissue distribution, expressed by the skin glands.

It is found in the secreted. Functionally, has antimicrobial activity against Gram-negative bacterium E.coli ATCC 8739 (MIC=50 ug), against Gram positive bacteria S.aureus ATCC 6538 (MIC=3.1 ug), methicillin-resistant S.aureus ATCC 43300 (MIC=12.5 ug), B.subtilis ATCC 6633 (MIC=12.5 ug) and against fungus C.albicans ATCC 90028 (MIC=50 ug). The polypeptide is Nigrocin-2ISb (Odorrana ishikawae (Ishikawa's frog)).